Consider the following 109-residue polypeptide: UPF0122 protein Cbei_1174 (109 aa).

The protein belongs to the UPF0122 family.

Its function is as follows. Might take part in the signal recognition particle (SRP) pathway. This is inferred from the conservation of its genetic proximity to ftsY/ffh. May be a regulatory protein. In Clostridium beijerinckii (strain ATCC 51743 / NCIMB 8052) (Clostridium acetobutylicum), this protein is UPF0122 protein Cbei_1174.